We begin with the raw amino-acid sequence, 553 residues long: MSDIALSISMLSLVAVLGLWLGNWRVYGVGLGIGGVLFGGIIVGHFAGVSDLALDEQTLHFIQEFGLILFVYTIGIQVGPGFFSSLRSSGLKLNGFAALLVILGCVVAAGLHQLFDVPLPVILGVFSGAVTNTPSLGAGQQILAELGADPGSTGLMGMGYAVAYPFGICGILLTMWLVRLFFRIKIDEEADLFEQHAGKTKESLQTINIAVRNPNMHGLMLCEIPSLDESDVICSRLKRGEELMVPRSDSRIELGDLLHLVGERHALHKVLLVLGEEVETSLSTRGTDLRVERVVVTNEQVLGKKIRDLDIKQKYDVVISRLNRAGIELVPTSQTSLQFGDILNLVGRLDAIEAVTNVVGNVQQKLQQMQMLPVFIGIGLGVLLGSIPFYLPGFPAALKLGLAGGPLVVALILSRIGSIGKLYWFMPPSANLALREIGIVLFLAVVGFKSGAGFVDTLINGDGPAWMMYGMAITLIPLLVVGVLARLYGKMSYLTLCGLLAGSMTDPPALAFANGMHPTSGASALSYATVYPLVMFLRIISPQLLAILLWAGV.

The next 5 membrane-spanning stretches (helical) occupy residues 4-24 (IALSISMLSLVAVLGLWLGNW), 29-49 (VGLGIGGVLFGGIIVGHFAGV), 65-85 (FGLILFVYTIGIQVGPGFFSS), 95-115 (GFAALLVILGCVVAAGLHQLF), and 158-178 (MGYAVAYPFGICGILLTMWLV). RCK C-terminal domains lie at 191–276 (DLFE…VLGE) and 279–361 (ETSL…VVGN). 6 consecutive transmembrane segments (helical) span residues 371–391 (MLPVFIGIGLGVLLGSIPFYL), 403–425 (AGGPLVVALILSRIGSIGKLYWF), 439–459 (IVLFLAVVGFKSGAGFVDTLI), 465–485 (AWMMYGMAITLIPLLVVGVLA), 493–513 (YLTLCGLLAGSMTDPPALAFA), and 533–553 (LVMFLRIISPQLLAILLWAGV).

This sequence belongs to the AAE transporter (TC 2.A.81) family. YidE subfamily.

The protein localises to the cell membrane. The polypeptide is Putative transport protein ASA_0825 (Aeromonas salmonicida (strain A449)).